Reading from the N-terminus, the 295-residue chain is Putative xyloglucan endotransglucosylase/hydrolase protein 1 (295 aa).

The signal sequence occupies residues 1 to 24 (MNKMEYLSIFGFVSVLYLIIRVDA). Positions 27–225 (YEVNGIDQSK…WSLAPFKANF (199 aa)) constitute a GH16 domain. The Nucleophile role is filled by Glu-113. Glu-117 acts as the Proton donor in catalysis. Xyloglucan-binding positions include Glu-117, 129–131 (QTN), and 139–141 (NRE). Residue Asn-180 is glycosylated (N-linked (GlcNAc...) asparagine). Xyloglucan-binding positions include 204–205 (NW) and Gly-209. N-linked (GlcNAc...) asparagine glycosylation is found at Asn-215 and Asn-229. Disulfide bonds link Cys-233–Cys-242 and Cys-278–Cys-291. Arg-283 contacts xyloglucan.

This sequence belongs to the glycosyl hydrolase 16 family. XTH group 1 subfamily. Post-translationally, contains at least one intrachain disulfide bond essential for its enzymatic activity.

It is found in the secreted. The protein localises to the cell wall. The protein resides in the extracellular space. Its subcellular location is the apoplast. The enzyme catalyses breaks a beta-(1-&gt;4) bond in the backbone of a xyloglucan and transfers the xyloglucanyl segment on to O-4 of the non-reducing terminal glucose residue of an acceptor, which can be a xyloglucan or an oligosaccharide of xyloglucan.. Its function is as follows. May catalyze xyloglucan endohydrolysis (XEH) and/or endotransglycosylation (XET). Cleaves and religates xyloglucan polymers, an essential constituent of the primary cell wall, and thereby participates in cell wall construction of growing tissues. In Arabidopsis thaliana (Mouse-ear cress), this protein is Putative xyloglucan endotransglucosylase/hydrolase protein 1 (XTH1).